Consider the following 20-residue polypeptide: Non-secretory ribonuclease (20 aa).

Residue histidine 16 is the Proton acceptor of the active site.

It belongs to the pancreatic ribonuclease family. Interacts with and forms a tight 1:1 complex with RNH1. Dimerization of two such complexes may occur.

It is found in the lysosome. The protein resides in the cytoplasmic granule. It carries out the reaction an [RNA] containing cytidine + H2O = an [RNA]-3'-cytidine-3'-phosphate + a 5'-hydroxy-ribonucleotide-3'-[RNA].. The catalysed reaction is an [RNA] containing uridine + H2O = an [RNA]-3'-uridine-3'-phosphate + a 5'-hydroxy-ribonucleotide-3'-[RNA].. Its function is as follows. This is a non-secretory ribonuclease. It is a pyrimidine specific nuclease with a slight preference for U. Cytotoxin and helminthotoxin. Possesses a wide variety of biological activities. In Sus scrofa (Pig), this protein is Non-secretory ribonuclease (RNASE2).